A 328-amino-acid polypeptide reads, in one-letter code: Malate dehydrogenase 1 (328 aa).

12–18 lines the NAD(+) pocket; that stretch reads GAAGQIA. R93 and R99 together coordinate substrate. Residues N106, Q113, and 130-132 contribute to the NAD(+) site; that span reads VGN. 2 residues coordinate substrate: N132 and R163. H188 (proton acceptor) is an active-site residue.

The protein belongs to the LDH/MDH superfamily. MDH type 2 family.

The catalysed reaction is (S)-malate + NAD(+) = oxaloacetate + NADH + H(+). Its function is as follows. Catalyzes the reversible oxidation of malate to oxaloacetate. This is Malate dehydrogenase 1 from Burkholderia vietnamiensis (strain G4 / LMG 22486) (Burkholderia cepacia (strain R1808)).